A 153-amino-acid polypeptide reads, in one-letter code: uncharacterized protein (153 aa).

Positions 72–98 (LPISKTNDAERSQQTTKAPVMERTESS) are disordered.

The protein localises to the cytoplasm. Its subcellular location is the nucleus. This is an uncharacterized protein from Schizosaccharomyces pombe (strain 972 / ATCC 24843) (Fission yeast).